The chain runs to 519 residues: FAD-dependent monooxygenase macF (519 aa).

A signal peptide spans 1–20 (MTKMTSIIGILMGVLTTATA). The 175-residue stretch at 88 to 262 (CRLNASCIVT…TEYDLTTNTG (175 aa)) folds into the FAD-binding PCMH-type domain. Residue H125 is modified to Pros-8alpha-FAD histidine.

The protein belongs to the oxygen-dependent FAD-linked oxidoreductase family.

It functions in the pathway secondary metabolite biosynthesis; terpenoid biosynthesis. FAD-dependent monooxygenase; part of the gene cluster that mediates the biosynthesis of macrophorins, isoprenoid epoxycyclohexenones containing cyclized drimane moieties. The first step of the pathway is the synthesis of 6-methylsalicylic acid (6-MSA) by the polyketide synthase macA. 6-MSA is then converted to m-cresol by the decarboxylase macB. The cytochrome P450 monooxygenase macC then catalyzes the oxidation of m-cresol to toluquinol. Epoxidation of toluquinol is then performed by the short chain dehydrogenase macD, with the help of macE, and a further prenylation by macG leads to 7-deacetoxyyanuthone A. The next step is the hydroxylation of C-22 of 7-deacetoxyyanuthone A by the cytochrome P450 monooxygenase macH to yield 22-deacetylyanuthone A. O-Mevalon transferase macI then attaches mevalon to the hydroxyl group of 22-deacetylyanuthone A to produce yanuthone E. The terpene cyclase macJ catalyzes the cyclization of 22-deacetylyanuthone A to macrophorin A. MacJ is also able to catalyze cyclization of yanuthone E and 7-deacetoxyyanuthone A to their corresponding macrophorins. The macJ products can be further modified by macH and macJ, as well as by the FAD-dependent monooxygenase macF, to produce additional macrophorins, including 4'-oxomacrophorin A, 4'-oxomacrophorin D and 4'-oxomacrophorin E. The protein is FAD-dependent monooxygenase macF of Penicillium terrestre.